The sequence spans 353 residues: Lactosylceramide 4-alpha-galactosyltransferase (353 aa).

Residues 1–22 (MSKPPDLLLRLLRGAPRQRVCT) are Cytoplasmic-facing. The chain crosses the membrane as a helical; Signal-anchor for type II membrane protein span at residues 23 to 43 (LFIIGFKFTFFVSIMIYWHVV). At 44-353 (GEPKEKGQLY…TTHEAMKMYL (310 aa)) the chain is on the lumenal side. The N-linked (GlcNAc...) asparagine glycan is linked to Asn-121. Positions 192 to 194 (DTD) match the DXD motif motif. N-linked (GlcNAc...) asparagine glycosylation occurs at Asn-203.

This sequence belongs to the glycosyltransferase 32 family. In terms of tissue distribution, ubiquitous. Highly expressed in kidney, heart, spleen, liver, testis and placenta.

Its subcellular location is the golgi apparatus membrane. It carries out the reaction a beta-D-Gal-(1-&gt;4)-beta-D-Glc-(1&lt;-&gt;1)-Cer(d18:1(4E)) + UDP-alpha-D-galactose = a globoside Gb3Cer (d18:1(4E)) + UDP + H(+). It catalyses the reaction a beta-D-Gal-(1&lt;-&gt;1')-ceramide + UDP-alpha-D-galactose = alpha-D-Gal-(1-&gt;4)-beta-D-Gal-(1&lt;-&gt;1')-Cer + UDP + H(+). It functions in the pathway glycolipid biosynthesis. Its function is as follows. Catalyzes the transfer of galactose from UDP-alpha-D-galactose to lactosylceramide/beta-D-galactosyl-(1-&gt;4)-beta-D-glucosyl-(1&lt;-&gt;1)-ceramide(d18:1(4E)) to produce globotriaosylceramide/globoside Gb3Cer (d18:1(4E)). Also able to transfer galactose to galactosylceramide/beta-D-Gal-(1&lt;-&gt;1')-Cer. Globoside Gb3Cer is a glycosphingolipid of the globo serie, one of the major types of neutral root structures of glycosphingolipids, that constitute a significant portion of mammalian cell membranes. Globotriaosylceramide/globoside Gb3Cer in blood and tissue cell membranes is the antigen Pk of blood histogroup P. Functionally, (Microbial infection) Globotriaosylceramide is one of the cellular ligands for bacterial verotoxins. The chain is Lactosylceramide 4-alpha-galactosyltransferase (A4GALT) from Homo sapiens (Human).